The primary structure comprises 338 residues: Lipopolysaccharide 1,2-glucosyltransferase (338 aa).

Residues 33-38 (GVDANY) and 130-131 (DA) each bind UDP. Mg(2+) is bound by residues D130 and D132. Short sequence motifs (DXD) lie at residues 130–132 (DAD) and 215–217 (DQD). H264 is a binding site for Mg(2+). 264–270 (HYTGATK) is a binding site for UDP.

It belongs to the glycosyltransferase 8 family. Mg(2+) is required as a cofactor.

It localises to the cell inner membrane. It catalyses the reaction UDP-glucose + [lipopolysaccharide] = UDP + D-glucosyl-[lipopolysaccharide].. The catalysed reaction is alpha-D-Glc-(1-&gt;3)-[alpha-D-Gal-(1-&gt;6)]-alpha-D-Glc-(1-&gt;3)-[L-alpha-D-Hep-(1-&gt;7)]-4-O-PO3(2-)-L-alpha-D-Hep-(1-&gt;3)-4-O-PO3(2-)-L-alpha-D-Hep-(1-&gt;5)-[alpha-Kdo-(2-&gt;4)]-alpha-Kdo-(2-&gt;6)-lipid A + UDP-alpha-D-glucose = alpha-D-Glc-(1-&gt;2)-alpha-D-Glc-(1-&gt;3)-[alpha-D-Gal-(1-&gt;6)]-alpha-D-Glc-(1-&gt;3)-[L-alpha-D-Hep-(1-&gt;7)]-4-O-PO3(2-)-L-alpha-D-Hep-(1-&gt;3)-4-O-PO3(2-)-L-alpha-D-Hep-(1-&gt;5)-[alpha-Kdo-(2-&gt;4)]-alpha-Kdo-(2-&gt;6)-lipid A + UDP + H(+). It participates in bacterial outer membrane biogenesis; LPS core biosynthesis. Its function is as follows. Glucosyltransferase involved in the biosynthesis of the core oligosaccharide region of lipopolysaccharide (LPS). Catalyzes the addition of a glucose (glucose III) to the outer-core glucose II. This is Lipopolysaccharide 1,2-glucosyltransferase from Escherichia coli (strain K12).